Consider the following 298-residue polypeptide: ATP synthase gamma chain (298 aa).

This sequence belongs to the ATPase gamma chain family. As to quaternary structure, F-type ATPases have 2 components, CF(1) - the catalytic core - and CF(0) - the membrane proton channel. CF(1) has five subunits: alpha(3), beta(3), gamma(1), delta(1), epsilon(1). CF(0) has three main subunits: a, b and c.

The protein resides in the cell inner membrane. Produces ATP from ADP in the presence of a proton gradient across the membrane. The gamma chain is believed to be important in regulating ATPase activity and the flow of protons through the CF(0) complex. In Francisella tularensis subsp. holarctica (strain LVS), this protein is ATP synthase gamma chain.